Reading from the N-terminus, the 239-residue chain is Acyl-protein thioesterase 1 (239 aa).

Catalysis depends on charge relay system residues serine 124, aspartate 180, and histidine 213.

Belongs to the AB hydrolase superfamily. AB hydrolase 2 family.

It is found in the cytoplasm. The protein localises to the nucleus. The enzyme catalyses S-hexadecanoyl-L-cysteinyl-[protein] + H2O = L-cysteinyl-[protein] + hexadecanoate + H(+). Its function is as follows. Hydrolyzes fatty acids from S-acylated cysteine residues in proteins with a strong preference for palmitoylated G-alpha proteins over other acyl substrates. Mediates the deacylation of G-alpha proteins such as GPA1 in vivo, but has weak or no activity toward palmitoylated Ras proteins. Has weak lysophospholipase activity in vitro; however such activity may not exist in vivo. The protein is Acyl-protein thioesterase 1 of Emericella nidulans (strain FGSC A4 / ATCC 38163 / CBS 112.46 / NRRL 194 / M139) (Aspergillus nidulans).